A 139-amino-acid chain; its full sequence is Invertebrate-type lysozyme 3 (139 aa).

A signal peptide spans methionine 1–alanine 18. Residues aspartate 19–cysteine 138 form the I-type lysozyme domain. Disulfide bonds link cysteine 20/cysteine 106, cysteine 23/cysteine 138, cysteine 25/cysteine 31, cysteine 36/cysteine 45, cysteine 58/cysteine 86, cysteine 76/cysteine 82, and cysteine 98/cysteine 120. Glutamate 28 functions as the Proton donor in the catalytic mechanism. Catalysis depends on aspartate 39, which acts as the Nucleophile. Lysine 51–aspartate 57 contributes to the substrate binding site. Substrate is bound by residues tyrosine 90 and histidine 113–glycine 115.

This sequence belongs to the glycosyl hydrolase 22 family. Type-I lysozyme subfamily. In terms of tissue distribution, expressed in pharynx grinder muscle pm7, isthmus marginal cell mc2 and pharyngeal muscle cell pm5, intestinal cells and at lower levels in coelomocytes and epidermis. Expressed at low levels in intestine.

It localises to the late endosome lumen. It is found in the recycling endosome lumen. The protein localises to the lysosome lumen. Its subcellular location is the secreted. The catalysed reaction is Hydrolysis of (1-&gt;4)-beta-linkages between N-acetylmuramic acid and N-acetyl-D-glucosamine residues in a peptidoglycan and between N-acetyl-D-glucosamine residues in chitodextrins.. Functionally, has bacteriolytic activity against Gram-positive bacteria. Plays a role in defense against bacterial pathogens. Involved in pharyngeal grinder function by enabling proper lysis of ingested bacteria. The protein is Invertebrate-type lysozyme 3 of Caenorhabditis elegans.